Reading from the N-terminus, the 224-residue chain is Haloacetate dehalogenase H-2 (224 aa).

Asp10 (nucleophile) is an active-site residue.

Belongs to the HAD-like hydrolase superfamily. S-2-haloalkanoic acid dehalogenase family.

It catalyses the reaction a haloacetate + H2O = a halide anion + glycolate + H(+). The protein is Haloacetate dehalogenase H-2 (dehH2) of Moraxella sp. (strain B).